The following is a 104-amino-acid chain: Nucleoid-associated protein LSL_1227 (104 aa).

Low complexity predominate over residues 1–19; the sequence is MMMRGMNMQSMMKQMQKLQ. Residues 1–24 are disordered; that stretch reads MMMRGMNMQSMMKQMQKLQKNMKK.

This sequence belongs to the YbaB/EbfC family. In terms of assembly, homodimer.

It is found in the cytoplasm. The protein localises to the nucleoid. Binds to DNA and alters its conformation. May be involved in regulation of gene expression, nucleoid organization and DNA protection. This chain is Nucleoid-associated protein LSL_1227, found in Ligilactobacillus salivarius (strain UCC118) (Lactobacillus salivarius).